Here is a 1247-residue protein sequence, read N- to C-terminus: Nidogen-1 (1247 aa).

Residues 1–28 form the signal peptide; it reads MLASSSRIRAAWTRALLLPLLLAGPVGC. One can recognise an NIDO domain in the interval 106-268; the sequence is PFLADLDTTD…GVWVFEIGSP (163 aa). Residues Tyr-289 and Tyr-296 each carry the sulfotyrosine modification. An EGF-like 1 domain is found at 386–426; that stretch reads SRQTCANNRHQCSVHAECRDYATGFCCSCVAGYTGNGRQCV. Cystine bridges form between Cys-390–Cys-403, Cys-397–Cys-412, Cys-411–Cys-618, Cys-414–Cys-425, Cys-672–Cys-685, Cys-679–Cys-695, Cys-697–Cys-708, Cys-714–Cys-727, Cys-721–Cys-736, Cys-738–Cys-750, Cys-762–Cys-777, Cys-769–Cys-787, Cys-789–Cys-800, Cys-806–Cys-817, Cys-811–Cys-826, Cys-828–Cys-839, Cys-849–Cys-878, Cys-889–Cys-896, and Cys-898–Cys-919. In terms of domain architecture, Nidogen G2 beta-barrel spans 430–667; it reads SPQRVNGKVK…GPVREGSPDA (238 aa). Positions 668-709 constitute an EGF-like 2 domain; sequence LQNPCYIGTHGCDTNAACRPGPRTQFTCECSIGFRGDGRTCY. Positions 702-704 match the Cell attachment site motif; the sequence is RGD. Residues 710-751 form the EGF-like 3; calcium-binding domain; the sequence is DIDECSEQPSVCGSHTICNNHPGTFRCECVEGYQFSDEGTCV. Residues 758–801 form the EGF-like 4 domain; sequence PINYCETGLHNCDIPQRAQCIYTGGSSYTCSCLPGFSGDGQACQ. Residues 802 to 840 enclose the EGF-like 5; calcium-binding domain; the sequence is DVDECQPSRCHPDAFCYNTPGSFTCQCKPGYQGDGFRCV. The Thyroglobulin type-1 domain maps to 846–919; the sequence is KTRCQHEREH…RTRPGMTPPC (74 aa). Thr-922 and Thr-935 each carry an O-linked (GalNAc...) threonine glycan. 4 LDL-receptor class B repeats span residues 990–1032, 1033–1075, 1076–1120, and 1121–1162; these read KMVY…DHLG, RNIF…DSVR, GNLY…DAFS, and SQLC…YGKN. One can recognise an EGF-like 6 domain in the interval 1208–1244; it reads GHNYCSVNNGGCTHLCLATPGSRTCRCPDNTLGVDCI. Cystine bridges form between Cys-1212/Cys-1223, Cys-1219/Cys-1232, and Cys-1234/Cys-1243.

As to quaternary structure, interacts with FBLN1. Interacts with LGALS3BP. Interacts with PLXDC1. Interacts with SVEP1. N- and O-glycosylated.

The protein localises to the secreted. Its subcellular location is the extracellular space. It localises to the extracellular matrix. The protein resides in the basement membrane. Functionally, sulfated glycoprotein widely distributed in basement membranes and tightly associated with laminin. Also binds to collagen IV and perlecan. It probably has a role in cell-extracellular matrix interactions. The polypeptide is Nidogen-1 (NID1) (Homo sapiens (Human)).